A 175-amino-acid polypeptide reads, in one-letter code: Alkyl hydroperoxide reductase AhpD (175 aa).

Catalysis depends on C131, which acts as the Proton donor. A disulfide bond links C131 and C134. C134 acts as the Cysteine sulfenic acid (-SOH) intermediate in catalysis.

It belongs to the AhpD family.

The enzyme catalyses N(6)-[(R)-dihydrolipoyl]-L-lysyl-[lipoyl-carrier protein] + a hydroperoxide = N(6)-[(R)-lipoyl]-L-lysyl-[lipoyl-carrier protein] + an alcohol + H2O. Functionally, antioxidant protein with alkyl hydroperoxidase activity. Required for the reduction of the AhpC active site cysteine residues and for the regeneration of the AhpC enzyme activity. This chain is Alkyl hydroperoxide reductase AhpD, found in Brucella abortus (strain 2308).